We begin with the raw amino-acid sequence, 1378 residues long: DNA-directed RNA polymerase subunit beta (1378 aa).

The protein belongs to the RNA polymerase beta chain family. As to quaternary structure, the RNAP catalytic core consists of 2 alpha, 1 beta, 1 beta' and 1 omega subunit. When a sigma factor is associated with the core the holoenzyme is formed, which can initiate transcription.

The catalysed reaction is RNA(n) + a ribonucleoside 5'-triphosphate = RNA(n+1) + diphosphate. DNA-dependent RNA polymerase catalyzes the transcription of DNA into RNA using the four ribonucleoside triphosphates as substrates. The protein is DNA-directed RNA polymerase subunit beta of Ruegeria pomeroyi (strain ATCC 700808 / DSM 15171 / DSS-3) (Silicibacter pomeroyi).